The sequence spans 576 residues: CTP synthase (576 aa).

The Glutamine amidotransferase type-1 domain occupies 305–559; that stretch reads QIALVGKYTH…LGLVAAAANI (255 aa). Catalysis depends on for GATase activity residues Cys404, His535, and Glu537.

It belongs to the CTP synthase family.

The catalysed reaction is UTP + L-glutamine + ATP + H2O = CTP + L-glutamate + ADP + phosphate + 2 H(+). Its pathway is pyrimidine metabolism; CTP biosynthesis via de novo pathway; CTP from UDP: step 2/2. Functionally, catalyzes the ATP-dependent amination of UTP to CTP with either L-glutamine or ammonia as the source of nitrogen. The polypeptide is CTP synthase (URA7) (Eremothecium gossypii (strain ATCC 10895 / CBS 109.51 / FGSC 9923 / NRRL Y-1056) (Yeast)).